An 823-amino-acid chain; its full sequence is Probable inorganic carbon transporter subunit DabA (823 aa).

Zn(2+)-binding residues include Cys361, Asp363, His527, and Cys542.

This sequence belongs to the inorganic carbon transporter (TC 9.A.2) DabA family. As to quaternary structure, forms a complex with DabB. Zn(2+) serves as cofactor.

Its subcellular location is the cell inner membrane. Intracellular DIC accumulation is sensitive to CCCP (carbonyl cyanide-m-chlorophenylhydrazone) and DCCD (N,N-dicyclohexylcarbodiimide) and therefore likely driven by either proton potential, ATP, or both. Functionally, part of an energy-coupled inorganic carbon pump. In terms of biological role, probably involved in transport of dissolved inorganic carbon (DIC) with upstream gene dabB (Tcr_0853); has been suggested to be a proton-DIC symporter. The chain is Probable inorganic carbon transporter subunit DabA from Hydrogenovibrio crunogenus (strain DSM 25203 / XCL-2) (Thiomicrospira crunogena).